The chain runs to 482 residues: MQRDLTVDEFLNYLYINVKELFTLKEKSFHFWRNSLISCSKTKNFLFVVVGDEVLVYDLKEISSDASEPEPCFYLHCPHEASSSRQGDINQDMPNVINNVRCELIGDLEYFITANDCGKVAIYDVQKLNREPIIYDVQHSAWGLAVSPLRILGISSNSHNVNLFHLSPEFKRFKEDYHSPWFRQETLVLEGHEHNIPCITFNSSGTLLLSGSIDRSLQIWDITSLSCLCKFYTKLSIWGVKFIDKNAFYHISILKHKPGSLIPAQQFGQSPWKPPIMSSSAFLLSHEEDFDDDAVFEGEYYVHIQDELPKTKVKNYFRTYLRQKPEELFIFTTKFSIVLCAYMGNSQIFPLVSSKNCFEEPITPRFQALHRINMIECIPELQSVVCASQSGQLTLLRLICTTKILNGNPIYVYSFVPHKIRLTHLVDAPLLGMSVCPLYPGEENPFKRFKIMLTVYTGKVISVEVQLSENLYDTSHIGNIPL.

2 WD repeats span residues 92-133 (DMPN…REPI) and 191-230 (GHEH…CLCK).

It localises to the cytoplasm. It is found in the nucleus. This is an uncharacterized protein from Schizosaccharomyces pombe (strain 972 / ATCC 24843) (Fission yeast).